The following is a 446-amino-acid chain: ATP synthase subunit b-delta (446 aa).

The segment at Met1–Leu168 is ATP synthase subunit b. The chain crosses the membrane as a helical span at residues Phe4 to Pro24. The interval Leu169–Asp446 is ATP synthase subunit delta.

In the N-terminal section; belongs to the ATPase B chain family. This sequence in the C-terminal section; belongs to the ATPase delta chain family. In terms of assembly, F-type ATPases have 2 components, F(1) - the catalytic core - and F(0) - the membrane proton channel. F(1) has five subunits: alpha(3), beta(3), gamma(1), delta(1), epsilon(1). F(0) has three main subunits: a(1), b(2) and c(10-14). The alpha and beta chains form an alternating ring which encloses part of the gamma chain. F(1) is attached to F(0) by a central stalk formed by the gamma and epsilon chains, while a peripheral stalk is formed by the delta and b chains.

The protein localises to the cell membrane. In terms of biological role, f(1)F(0) ATP synthase produces ATP from ADP in the presence of a proton or sodium gradient. F-type ATPases consist of two structural domains, F(1) containing the extramembraneous catalytic core and F(0) containing the membrane proton channel, linked together by a central stalk and a peripheral stalk. During catalysis, ATP synthesis in the catalytic domain of F(1) is coupled via a rotary mechanism of the central stalk subunits to proton translocation. This fusion protein includes a component of the F(0) channel (subunit b) and of the F(1) subunit (subunit delta). Two copies of subunit b and one of delta together form the peripheral 'stator' stalk which links F(1) to F(0). This Mycobacterium bovis (strain ATCC BAA-935 / AF2122/97) protein is ATP synthase subunit b-delta (atpFH).